Here is a 470-residue protein sequence, read N- to C-terminus: MSTSAAATLPLSVISKNLRKVFLSQKTRKIDWRYSQLKAIKKMMSENKDNITAAVKKDLGKHEFEIHQTEIVMIQTELDETISHLESWNKTEKVYSPLHFKPASSYILKEPLGVVLIMSPWNYPVNLALIPLIGAIAGGNCALLKLSRHSYNISKLLHGLLTKYLDPECFEFDCEGGAPYITELLEYKWDHIFFTGSVKVGKIVYQAAAKFLTPVTLELGGKNPCIVDKDTDIKLTARRLIWGKCWNAGQTCIGLDYLIVHKSILEPLIEEFKVVLKEFFGEDIKKSTSFARIISSAAAERLQQLFSMGKVVIGGEADIAERYIAPTVIVDPDLDSPLMQDEIFGPVLPIVTYENIDECLEFIQNRPHALTLYLFSRDQAIQDKVLDGTQSGSLMINDTLLHFTNPNLPFGGIGDSGIGSYHGKGTFDIFVHKRGLVQSTTKKFLDLPLRYPPYTPFSDNVAGKILGSGW.

An NAD(+)-binding site is contributed by 196-201 (GSVKVG). Catalysis depends on residues E218 and C252.

It belongs to the aldehyde dehydrogenase family.

The protein localises to the cytoplasm. The catalysed reaction is an aldehyde + NADP(+) + H2O = a carboxylate + NADPH + 2 H(+). The enzyme catalyses an aldehyde + NAD(+) + H2O = a carboxylate + NADH + 2 H(+). The protein is Aldehyde dehydrogenase family 3 comG (comG) of Dictyostelium discoideum (Social amoeba).